We begin with the raw amino-acid sequence, 360 residues long: Phospho-N-acetylmuramoyl-pentapeptide-transferase (360 aa).

Transmembrane regions (helical) follow at residues 27–47 (GAMITSALIVFLFGPSIINSL), 71–91 (TPTMGGLMIMTGILVSCLLWA), 93–113 (LASVYVWVVLLVTVGFGAIGF), 128–148 (FSGKARLGIEFLIAAVAAFVI), 168–188 (FVVNLSWFFIPFAAFVMVGAG), 199–219 (GLAIVPVMVAAASFGFIAYLS), 239–259 (LAVVLGAVIGAGLGFLWFNAP), 262–282 (AIFMGDTGSLALGGMLGTVAV), 288–308 (IVLAIIGGLFVVEALSVIIQV), and 337–357 (QVVIRFWIVAIILAMIGLSTL).

It belongs to the glycosyltransferase 4 family. MraY subfamily. It depends on Mg(2+) as a cofactor.

It localises to the cell inner membrane. The enzyme catalyses UDP-N-acetyl-alpha-D-muramoyl-L-alanyl-gamma-D-glutamyl-meso-2,6-diaminopimeloyl-D-alanyl-D-alanine + di-trans,octa-cis-undecaprenyl phosphate = di-trans,octa-cis-undecaprenyl diphospho-N-acetyl-alpha-D-muramoyl-L-alanyl-D-glutamyl-meso-2,6-diaminopimeloyl-D-alanyl-D-alanine + UMP. It participates in cell wall biogenesis; peptidoglycan biosynthesis. Its function is as follows. Catalyzes the initial step of the lipid cycle reactions in the biosynthesis of the cell wall peptidoglycan: transfers peptidoglycan precursor phospho-MurNAc-pentapeptide from UDP-MurNAc-pentapeptide onto the lipid carrier undecaprenyl phosphate, yielding undecaprenyl-pyrophosphoryl-MurNAc-pentapeptide, known as lipid I. The polypeptide is Phospho-N-acetylmuramoyl-pentapeptide-transferase (Brucella anthropi (strain ATCC 49188 / DSM 6882 / CCUG 24695 / JCM 21032 / LMG 3331 / NBRC 15819 / NCTC 12168 / Alc 37) (Ochrobactrum anthropi)).